Reading from the N-terminus, the 239-residue chain is Fatty acid metabolism regulator protein (239 aa).

Residues 6 to 74 (QSPAGFAEEY…HGKPTKVNNF (69 aa)) form the HTH gntR-type domain. Residues 34–53 (ERELSELIGVTRTTLREVLQ) constitute a DNA-binding region (H-T-H motif).

As to quaternary structure, homodimer.

Its subcellular location is the cytoplasm. Multifunctional regulator of fatty acid metabolism. This chain is Fatty acid metabolism regulator protein, found in Enterobacter sp. (strain 638).